The primary structure comprises 509 residues: L-aspartate semialdehyde sulfurtransferase (509 aa).

The active-site Cysteine persulfide intermediate is the Cys-133. CBS domains follow at residues 394–450 (LSKP…NKKT) and 455–509 (MTRN…GGKK). S-methyl-5'-thioadenosine contacts are provided by Ser-395, Ile-399, and His-421. Residues Asp-439, Thr-456, Ile-460, and 479-482 (NISG) each bind S-adenosyl-L-methionine. 497 to 500 (TSED) lines the S-methyl-5'-thioadenosine pocket.

The protein belongs to the L-aspartate semialdehyde sulfurtransferase family. In terms of assembly, homodimer. May form a complex with MJ0099.

It catalyses the reaction L-aspartate 4-semialdehyde + reduced 2[4Fe-4S]-[ferredoxin] + hydrogen sulfide + 3 H(+) = oxidized 2[4Fe-4S]-[ferredoxin] + L-homocysteine + H2O. The protein operates within amino-acid biosynthesis. The ligand-induced conformational reorganization of the protein could be an important regulatory mechanism. Its function is as follows. Required for O-acetylhomoserine sulfhydrylase (OAHS)-independent homocysteine (Hcy) biosynthesis. Together with MJ0099, catalyzes the condensation of sulfide with aspartate semialdehyde to generate homocysteine. Likely functions through persulfide intermediate. The chain is L-aspartate semialdehyde sulfurtransferase from Methanocaldococcus jannaschii (strain ATCC 43067 / DSM 2661 / JAL-1 / JCM 10045 / NBRC 100440) (Methanococcus jannaschii).